The sequence spans 396 residues: Putative cyclin-B3-1 (396 aa).

The interval 1–98 (MLRDGNKQSK…KVLDVTAKPK (98 aa)) is disordered. Polar residues predominate over residues 21-32 (KTTVKTSLQNRS). Over residues 39 to 57 (VGRSKSRSISSIPSSAVAS) the composition is skewed to low complexity. Residues 76-85 (GESSSSGNKD) are compositionally biased toward polar residues.

It belongs to the cyclin family. Cyclin AB subfamily.

This is Putative cyclin-B3-1 (CYCB3-1) from Arabidopsis thaliana (Mouse-ear cress).